We begin with the raw amino-acid sequence, 957 residues long: Glycine dehydrogenase (decarboxylating) (957 aa).

Position 708 is an N6-(pyridoxal phosphate)lysine (Lys-708).

The protein belongs to the GcvP family. In terms of assembly, the glycine cleavage system is composed of four proteins: P, T, L and H. Pyridoxal 5'-phosphate serves as cofactor.

The enzyme catalyses N(6)-[(R)-lipoyl]-L-lysyl-[glycine-cleavage complex H protein] + glycine + H(+) = N(6)-[(R)-S(8)-aminomethyldihydrolipoyl]-L-lysyl-[glycine-cleavage complex H protein] + CO2. In terms of biological role, the glycine cleavage system catalyzes the degradation of glycine. The P protein binds the alpha-amino group of glycine through its pyridoxal phosphate cofactor; CO(2) is released and the remaining methylamine moiety is then transferred to the lipoamide cofactor of the H protein. The sequence is that of Glycine dehydrogenase (decarboxylating) from Klebsiella pneumoniae subsp. pneumoniae (strain ATCC 700721 / MGH 78578).